The primary structure comprises 697 residues: Elongation factor G (697 aa).

In terms of domain architecture, tr-type G spans 10 to 285; sequence AKTRNIGIMA…GVIDYLPSPL (276 aa). GTP contacts are provided by residues 19–26, 83–87, and 137–140; these read AHIDAGKT, DTPGH, and NKMD.

Belongs to the TRAFAC class translation factor GTPase superfamily. Classic translation factor GTPase family. EF-G/EF-2 subfamily.

The protein localises to the cytoplasm. In terms of biological role, catalyzes the GTP-dependent ribosomal translocation step during translation elongation. During this step, the ribosome changes from the pre-translocational (PRE) to the post-translocational (POST) state as the newly formed A-site-bound peptidyl-tRNA and P-site-bound deacylated tRNA move to the P and E sites, respectively. Catalyzes the coordinated movement of the two tRNA molecules, the mRNA and conformational changes in the ribosome. The protein is Elongation factor G of Lactobacillus helveticus (strain DPC 4571).